The primary structure comprises 395 residues: Flap endonuclease 1 (395 aa).

The N-domain stretch occupies residues 1–104 (MGIKHLYQII…GELAKRFMRK (104 aa)). Asp34 contacts Mg(2+). Arg47 and Arg70 together coordinate DNA. Asp86, Glu158, Glu160, Asp179, and Asp181 together coordinate Mg(2+). The segment at 122–253 (EVEKFSRRTV…NTALKLIRDH (132 aa)) is I-domain. Glu158 is a DNA binding site. 2 residues coordinate DNA: Gly231 and Asp233. Mg(2+) is bound at residue Asp233. The segment at 341–349 (QQSRLEGFF) is interaction with PCNA. Residues 360–389 (AVLKRKHEEKLELQKKKKKEDSKAKKEAKS) show a composition bias toward basic and acidic residues. Residues 360 to 395 (AVLKRKHEEKLELQKKKKKEDSKAKKEAKSKPRGTT) form a disordered region.

It belongs to the XPG/RAD2 endonuclease family. FEN1 subfamily. Interacts with PCNA. Three molecules of FEN1 bind to one PCNA trimer with each molecule binding to one PCNA monomer. PCNA stimulates the nuclease activity without altering cleavage specificity. The cofactor is Mg(2+). In terms of processing, phosphorylated. Phosphorylation upon DNA damage induces relocalization to the nuclear plasma.

It is found in the nucleus. The protein localises to the nucleolus. The protein resides in the nucleoplasm. Its subcellular location is the mitochondrion. In terms of biological role, structure-specific nuclease with 5'-flap endonuclease and 5'-3' exonuclease activities involved in DNA replication and repair. During DNA replication, cleaves the 5'-overhanging flap structure that is generated by displacement synthesis when DNA polymerase encounters the 5'-end of a downstream Okazaki fragment. It enters the flap from the 5'-end and then tracks to cleave the flap base, leaving a nick for ligation. Also involved in the long patch base excision repair (LP-BER) pathway, by cleaving within the apurinic/apyrimidinic (AP) site-terminated flap. Acts as a genome stabilization factor that prevents flaps from equilibrating into structures that lead to duplications and deletions. Also possesses 5'-3' exonuclease activity on nicked or gapped double-stranded DNA, and exhibits RNase H activity. Also involved in replication and repair of rDNA and in repairing mitochondrial DNA. The chain is Flap endonuclease 1 from Ajellomyces capsulatus (strain H143) (Darling's disease fungus).